The following is a 171-amino-acid chain: UPF0098 protein aq_1250 (171 aa).

The protein belongs to the UPF0098 family.

The sequence is that of UPF0098 protein aq_1250 from Aquifex aeolicus (strain VF5).